Here is a 103-residue protein sequence, read N- to C-terminus: Leukocyte cysteine proteinase inhibitor 1 (103 aa).

The residue at position 1 (M1) is a Blocked amino end (Met); partial. The interval 1–20 is disordered; the sequence is MESEEMLAGGLTEPRPATPE. The Secondary area of contact signature appears at 51 to 55; sequence QVVAG.

Belongs to the cystatin family.

Its subcellular location is the cytoplasm. Potent inhibitor of cathepsins L and S, and papain. The polypeptide is Leukocyte cysteine proteinase inhibitor 1 (Sus scrofa (Pig)).